A 390-amino-acid chain; its full sequence is Period circadian protein (390 aa).

4 disordered regions span residues 27–120 (VTAP…APPV), 164–188 (LEYS…WEGE), 247–266 (GGNG…STNQ), and 327–356 (SPSG…TSQA). Positions 93 to 114 (GTSGTGNSGDGGGGGGADGTGS) are enriched in gly residues. Gly residues predominate over residues 247 to 256 (GGNGNVGSGN).

Forms a heterodimer with timeless (TIM); the complex then translocates into the nucleus. In terms of processing, phosphorylated with a circadian rhythmicity, probably by the double-time protein (dbt). Phosphorylation could be implicated in the stability of per monomer and in the formation of heterodimer per-tim.

The protein resides in the nucleus. Its subcellular location is the cytoplasm. It localises to the perinuclear region. Essential for biological clock functions. Determines the period length of circadian and ultradian rhythms; an increase in PER dosage leads to shortened circadian rhythms and a decrease leads to lengthened circadian rhythms. Essential for the circadian rhythmicity of locomotor activity, eclosion behavior, and for the rhythmic component of the male courtship song that originates in the thoracic nervous system. The biological cycle depends on the rhythmic formation and nuclear localization of the TIM-PER complex. Light induces the degradation of TIM, which promotes elimination of PER. Nuclear activity of the heterodimer coordinatively regulates PER and TIM transcription through a negative feedback loop. Behaves as a negative element in circadian transcriptional loop. Does not appear to bind DNA, suggesting indirect transcriptional inhibition. This Drosophila tropicalis (Fruit fly) protein is Period circadian protein (per).